The sequence spans 579 residues: DELLA protein RGA2 (579 aa).

A disordered region spans residues 1-31; sequence MKRDLHQFQGPPDTRFPNHGTANTGSSSKDK. Residues 45-49 carry the DELLA motif motif; it reads DELLA. Low complexity-rich tracts occupy residues 149-162 and 174-183; these read SSSS…NSQS and SLVTGTTVTT. The disordered stretch occupies residues 149 to 183; it reads SSSSSNQAGDNSQSTKRLKSCSSPDSLVTGTTVTT. The GRAS domain maps to 205 to 574; it reads VDSQENGVRL…RPLITTSAWK (370 aa). The interval 212-266 is leucine repeat I (LRI); that stretch reads VRLVHALMACAEAIQNNDLSIAEALVKQIGFLAVSQAGAMRKVATYFAEALARRI. A VHIID region spans residues 285 to 350; that stretch reads QMHFYETCPY…GGPPVFRLTG (66 aa). The VHIID signature appears at 316–320; the sequence is VHVID. The interval 364-396 is leucine repeat II (LRII); sequence EVGCKLAQLAEAIHVEFEYRGFVANSLADLDAS. A PFYRE region spans residues 408–495; it reads VAVNSVFELH…EVYLGKQICN (88 aa). An LXXLL motif motif is present at residues 416–420; sequence LHKLL. An SAW region spans residues 498–574; that stretch reads ACEGPDRVER…RPLITTSAWK (77 aa).

Belongs to the GRAS family. DELLA subfamily. In terms of processing, phosphorylated. Ubiquitinated. Upon GA application it is ubiquitinated, leading to its subsequent degradation.

The protein resides in the nucleus. Functionally, probable transcriptional regulator that acts as a repressor of the gibberellin (GA) signaling pathway. Probably acts by participating in large multiprotein complexes that represses transcription of GA-inducible genes. Upon GA application, it is degraded by the proteasome, allowing the GA signaling pathway. In Brassica campestris (Field mustard), this protein is DELLA protein RGA2 (RGA2).